A 201-amino-acid chain; its full sequence is Prostamide/prostaglandin F synthase (201 aa).

Belongs to the peroxiredoxin-like PRXL2 family. Prostamide/prostaglandin F synthase subfamily.

It is found in the cytoplasm. The protein localises to the cytosol. The catalysed reaction is prostaglandin H2 + [thioredoxin]-dithiol = prostaglandin F2alpha + [thioredoxin]-disulfide. It catalyses the reaction prostamide F2alpha + [thioredoxin]-disulfide = prostamide H2 + [thioredoxin]-dithiol. Its function is as follows. Catalyzes the reduction of prostaglandin-ethanolamide H(2) (prostamide H(2)) to prostamide F(2alpha) with NADPH as proton donor. Also able to reduce prostaglandin H(2) to prostaglandin F(2alpha). The polypeptide is Prostamide/prostaglandin F synthase (prxl2b) (Xenopus tropicalis (Western clawed frog)).